A 406-amino-acid polypeptide reads, in one-letter code: Erythromycin esterase type I (406 aa).

Functionally, this enzyme confers resistance to erythromycin through inactivation by hydrolyzing the lactone ring of the antibiotic. The chain is Erythromycin esterase type I (ereA) from Escherichia coli.